A 92-amino-acid polypeptide reads, in one-letter code: Small ribosomal subunit protein bS20 (92 aa).

Positions 1-28 (MANTASAEKRNRQAQKRRARNVQVRTGV) are disordered.

It belongs to the bacterial ribosomal protein bS20 family.

Functionally, binds directly to 16S ribosomal RNA. This Anaeromyxobacter dehalogenans (strain 2CP-C) protein is Small ribosomal subunit protein bS20.